The following is a 1088-amino-acid chain: RNA-directed RNA polymerase (1088 aa).

Residues 501–687 (LSYGDVTRFL…AKRYIAGGKI (187 aa)) form the RdRp catalytic domain.

Belongs to the reoviridae RNA-directed RNA polymerase family. As to quaternary structure, interacts with VP3 (Potential). Interacts with VP2; this interaction activates VP1. Interacts with NSP5; this interaction is probably necessary for the formation of functional virus factories. Interacts with NSP2; this interaction is weak. Mg(2+) serves as cofactor.

The protein localises to the virion. It catalyses the reaction RNA(n) + a ribonucleoside 5'-triphosphate = RNA(n+1) + diphosphate. In terms of biological role, RNA-directed RNA polymerase that is involved in both transcription and genome replication. Together with VP3 capping enzyme, forms an enzyme complex positioned near the channels situated at each of the five-fold vertices of the core. Following infection, the outermost layer of the virus is lost, leaving a double-layered particle (DLP) made up of the core and VP6 shell. VP1 then catalyzes the transcription of fully conservative plus-strand genomic RNAs that are extruded through the DLP's channels into the cytoplasm where they function as mRNAs for translation of viral proteins. One copy of each of the viral (+)RNAs is also recruited during core assembly, together with newly synthesized polymerase complexes and VP2. The polymerase of these novo-formed particles catalyzes the synthesis of complementary minus-strands leading to dsRNA formation. To do so, the polymerase specifically recognizes and binds 4 bases 5'-UGUG-3' in the conserved 3'-sequence of plus-strand RNA templates. VP2 presumably activates the autoinhibited VP1-RNA complex to coordinate packaging and genome replication. Once dsRNA synthesis is complete, the polymerase switches to the transcriptional mode, thus providing secondary transcription. In Macaca mulatta (Rhesus macaque), this protein is RNA-directed RNA polymerase.